The chain runs to 74 residues: Ubiquitin-like protein FUBI (74 aa).

This sequence belongs to the ubiquitin family.

Confers arsenite resistance. This is Ubiquitin-like protein FUBI (FAU) from Cricetulus griseus (Chinese hamster).